The sequence spans 79 residues: Conotoxin 8 (79 aa).

The first 22 residues, 1–22 (MKLTCVLIITVLFLTASQLITA), serve as a signal peptide directing secretion. A propeptide spanning residues 23-47 (DYSRGQRQYRAVRLGDEMRNFKGAR) is cleaved from the precursor. 3 cysteine pairs are disulfide-bonded: Cys-49–Cys-62, Cys-56–Cys-67, and Cys-61–Cys-77.

The protein belongs to the conotoxin O1 superfamily. Expressed by the venom duct.

It localises to the secreted. In Conus vexillum (Flag cone), this protein is Conotoxin 8.